The following is a 265-amino-acid chain: Glutamate racemase (265 aa).

Residues 9–10 (DS) and 41–42 (YS) each bind substrate. Cys73 serves as the catalytic Proton donor/acceptor. 74–75 (NT) provides a ligand contact to substrate. Cys184 serves as the catalytic Proton donor/acceptor. 185–186 (TH) is a binding site for substrate.

Belongs to the aspartate/glutamate racemases family.

The enzyme catalyses L-glutamate = D-glutamate. Its pathway is cell wall biogenesis; peptidoglycan biosynthesis. Functionally, provides the (R)-glutamate required for cell wall biosynthesis. The polypeptide is Glutamate racemase (Haemophilus ducreyi (strain 35000HP / ATCC 700724)).